The primary structure comprises 151 residues: U-scoloptoxin(17)-Er2a (151 aa).

The signal sequence occupies residues 1–22 (MKSFFVVFAIVFQATLVALSLA).

Belongs to the scoloptoxin-17 family. Post-translationally, contains 5 disulfide bonds. As to expression, expressed by the venom gland.

It is found in the secreted. The chain is U-scoloptoxin(17)-Er2a from Ethmostigmus rubripes (Giant centipede).